Reading from the N-terminus, the 244-residue chain is 5-oxoprolinase subunit A (244 aa).

The protein belongs to the LamB/PxpA family. In terms of assembly, forms a complex composed of PxpA, PxpB and PxpC.

It carries out the reaction 5-oxo-L-proline + ATP + 2 H2O = L-glutamate + ADP + phosphate + H(+). Catalyzes the cleavage of 5-oxoproline to form L-glutamate coupled to the hydrolysis of ATP to ADP and inorganic phosphate. The sequence is that of 5-oxoprolinase subunit A from Escherichia coli O17:K52:H18 (strain UMN026 / ExPEC).